The following is a 406-amino-acid chain: E3 ubiquitin-protein ligase RING1 (406 aa).

Phosphothreonine is present on T24. Residues 30–234 (MDGTEIAVSP…GGAGSEDSGD (205 aa)) are necessary for transcriptional repression. Phosphoserine is present on S38. The segment at 48–88 (CPICLDMLKNTMTTKECLHRFCSDCIVTALRSGNKECPTCR) adopts an RING-type zinc-finger fold. Phosphoserine occurs at positions 140, 187, and 190. 2 disordered regions span residues 148-263 (QAMH…GEIE) and 309-354 (QQQE…PSLE). The segment covering 175–187 (EPGEGEGDGEDVS) has biased composition (acidic residues). The Nuclear localization signal motif lies at 201 to 204 (KRPR). Over residues 205–228 (GGGAGGSSVGTGGGGTGGVGGGAG) the composition is skewed to gly residues. Phosphothreonine is present on residues T215 and T220. Residues S229 and S232 each carry the phosphoserine modification. Residues 230 to 406 (EDSGDRGGTL…LCYAPTKDPK (177 aa)) form a necessary for interaction with CBX2 region. Residues 235–244 (RGGTLGGGTL) show a composition bias toward gly residues. Over residues 246-258 (PPSPPGAPSPPEP) the composition is skewed to pro residues. A phosphoserine mark is found at S248 and S254. Residues 315 to 343 (EPGGPGGGASDTGGPDGCGGEGGGAGGGD) are compositionally biased toward gly residues.

In terms of assembly, component of chromatin-associated Polycomb (PcG) complexes. Interacts with BMI1. Part of the E2F6.com-1 complex in G0 phase composed of E2F6, MGA, MAX, TFDP1, CBX3, BAT8, EUHMTASE1, RING1, RNF2/RING2 MBLR, L3MBTL2 and YAF2. Interacts with CBX2 and PCGF6. Component of a PRC1-like complex. Component of repressive BCOR complex containing Polycomb group subcomplex at least composed of RYBP, PCGF1, BCOR and RNF2/RING2. Interacts with PCGF2, RNF2; CBX6, CBX7 and CBX8. Interacts with PHC2. Interacts with MN1. Interacts with USP26.

It localises to the nucleus. It is found in the nucleus speckle. The enzyme catalyses S-ubiquitinyl-[E2 ubiquitin-conjugating enzyme]-L-cysteine + [acceptor protein]-L-lysine = [E2 ubiquitin-conjugating enzyme]-L-cysteine + N(6)-ubiquitinyl-[acceptor protein]-L-lysine.. The protein operates within protein modification; protein ubiquitination. Constitutes one of the E3 ubiquitin-protein ligases that mediate monoubiquitination of 'Lys-119' of histone H2A, thereby playing a central role in histone code and gene regulation. H2A 'Lys-119' ubiquitination gives a specific tag for epigenetic transcriptional repression and participates in X chromosome inactivation of female mammals. Essential component of a Polycomb group (PcG) multiprotein PRC1-like complex, a complex class required to maintain the transcriptionally repressive state of many genes, including Hox genes, throughout development. PcG PRC1 complex acts via chromatin remodeling and modification of histones, rendering chromatin heritably changed in its expressibility. Compared to RNF2/RING2, it does not have the main E3 ubiquitin ligase activity on histone H2A, and it may rather act as a modulator of RNF2/RING2 activity. This chain is E3 ubiquitin-protein ligase RING1, found in Homo sapiens (Human).